The chain runs to 475 residues: Ribulose bisphosphate carboxylase large chain (475 aa).

The propeptide occupies 1–2; that stretch reads MS. Pro3 is subject to N-acetylproline. Lys14 carries the post-translational modification N6,N6,N6-trimethyllysine. Positions 123 and 173 each coordinate substrate. Residue Lys175 is the Proton acceptor of the active site. Lys177 provides a ligand contact to substrate. Positions 201, 203, and 204 each coordinate Mg(2+). Lys201 bears the N6-carboxylysine mark. His294 acts as the Proton acceptor in catalysis. Positions 295, 327, and 379 each coordinate substrate.

This sequence belongs to the RuBisCO large chain family. Type I subfamily. In terms of assembly, heterohexadecamer of 8 large chains and 8 small chains. The cofactor is Mg(2+).

The protein resides in the plastid. It catalyses the reaction 2 (2R)-3-phosphoglycerate + 2 H(+) = D-ribulose 1,5-bisphosphate + CO2 + H2O. It carries out the reaction D-ribulose 1,5-bisphosphate + O2 = 2-phosphoglycolate + (2R)-3-phosphoglycerate + 2 H(+). RuBisCO catalyzes two reactions: the carboxylation of D-ribulose 1,5-bisphosphate, the primary event in carbon dioxide fixation, as well as the oxidative fragmentation of the pentose substrate in the photorespiration process. Both reactions occur simultaneously and in competition at the same active site. The sequence is that of Ribulose bisphosphate carboxylase large chain from Aneura mirabilis (Parasitic liverwort).